The following is a 184-amino-acid chain: Nucleoside triphosphate pyrophosphatase (184 aa).

The active-site Proton acceptor is Asp-71.

Belongs to the Maf family. A divalent metal cation serves as cofactor.

It is found in the cytoplasm. The catalysed reaction is a ribonucleoside 5'-triphosphate + H2O = a ribonucleoside 5'-phosphate + diphosphate + H(+). It carries out the reaction a 2'-deoxyribonucleoside 5'-triphosphate + H2O = a 2'-deoxyribonucleoside 5'-phosphate + diphosphate + H(+). Nucleoside triphosphate pyrophosphatase. May have a dual role in cell division arrest and in preventing the incorporation of modified nucleotides into cellular nucleic acids. This is Nucleoside triphosphate pyrophosphatase from Synechococcus sp. (strain CC9605).